Here is a 615-residue protein sequence, read N- to C-terminus: DNA mismatch repair protein MutL (615 aa).

The disordered stretch occupies residues 363–397; it reads FAEPAAREPVAPRYTPAPASGSRPAAPWPNAQPGY. Low complexity predominate over residues 364-391; sequence AEPAAREPVAPRYTPAPASGSRPAAPWP.

The protein belongs to the DNA mismatch repair MutL/HexB family.

Its function is as follows. This protein is involved in the repair of mismatches in DNA. It is required for dam-dependent methyl-directed DNA mismatch repair. May act as a 'molecular matchmaker', a protein that promotes the formation of a stable complex between two or more DNA-binding proteins in an ATP-dependent manner without itself being part of a final effector complex. In Escherichia coli (strain K12 / MC4100 / BW2952), this protein is DNA mismatch repair protein MutL.